Reading from the N-terminus, the 439-residue chain is MHKVTKFAIRHLSDKASRFVPKAGVYPKGYAVGGIHCGVKKDGKSLDLAILQNTFGKNASAAGVFTVNKFKAAPVQVSKKILKEKSGSGINSFVINSGNANAVTGTQGMKDAEDMVLVTDSVLENPTNSSLVMSTGVIGNNLPIDKILGGIPKLASQHLGNTHQHWIDCATAICTTDTFPKLVTKRFSIGDDTYTLAGLCKGAGMICPNMATLLGFFVTDAPVTPSALQQILKYAVDRSFNSITVDGDMSTNDTIVAMANGAAGGEVIDNTSSCAERYSRLQAEIVDFAQQLAQLVVRDGEGATKFITIRVKDALSYKDAKSIASSIANSSLFKTAMYGKDANWGRILCAIGYADVTSANSVIPEKTSVKFVPVDGSEHLNLLVNGEPEQVDEERASEILQNEDLIVEINLGTNGGQSADFWTCDLSHEYVTINGDYRS.

Substrate-binding residues include T175, K201, T212, E301, N434, and S439. T212 serves as the catalytic Nucleophile.

The protein belongs to the ArgJ family. In terms of assembly, heterodimer of an alpha and a beta chain. The alpha and beta chains are autoproteolytically processed from a single precursor protein within the mitochondrion.

The protein localises to the mitochondrion matrix. The catalysed reaction is N(2)-acetyl-L-ornithine + L-glutamate = N-acetyl-L-glutamate + L-ornithine. The enzyme catalyses L-glutamate + acetyl-CoA = N-acetyl-L-glutamate + CoA + H(+). Its pathway is amino-acid biosynthesis; L-arginine biosynthesis; L-ornithine and N-acetyl-L-glutamate from L-glutamate and N(2)-acetyl-L-ornithine (cyclic): step 1/1. It participates in amino-acid biosynthesis; L-arginine biosynthesis; N(2)-acetyl-L-ornithine from L-glutamate: step 1/4. Functionally, catalyzes two activities which are involved in the cyclic version of arginine biosynthesis: the synthesis of acetylglutamate from glutamate and acetyl-CoA, and of ornithine by transacetylation between acetylornithine and glutamate. The chain is Arginine biosynthesis bifunctional protein ArgJ, mitochondrial (ECM42) from Candida albicans (strain SC5314 / ATCC MYA-2876) (Yeast).